We begin with the raw amino-acid sequence, 159 residues long: Ribosomal RNA large subunit methyltransferase H (159 aa).

Residues L76, G108, and 127–132 (FGLLTL) contribute to the S-adenosyl-L-methionine site.

This sequence belongs to the RNA methyltransferase RlmH family. Homodimer.

The protein resides in the cytoplasm. It catalyses the reaction pseudouridine(1915) in 23S rRNA + S-adenosyl-L-methionine = N(3)-methylpseudouridine(1915) in 23S rRNA + S-adenosyl-L-homocysteine + H(+). Specifically methylates the pseudouridine at position 1915 (m3Psi1915) in 23S rRNA. This chain is Ribosomal RNA large subunit methyltransferase H, found in Streptococcus pyogenes serotype M12 (strain MGAS2096).